A 289-amino-acid chain; its full sequence is MNSKTHLLLALTMLIWAGSFIFIKIGLKELDPFNLAFYRFLLASPLLMAWVFWKRGLAKPSGSEWLHLSVLALSGVTLLYAFQFLALKYTTATNASILINTSAVFVALWGLVKGEANPRKLAGVFLSFAGVVLIVSKGTLEFFSSKTIFGDVLMIVDGFLWAVYTVLGSKMLLKYDHETLTAYAFALGTIFLIPFALMSGFANPVTFNPETVAALLYLSILCSVFAYVVWYYALTNADSTSVAVYVYLVPLFTAIFAFYALNEKPDFFTAIGGIITIAGVYLTTAKQHQ.

Helical transmembrane passes span 7 to 27, 33 to 53, 65 to 85, 92 to 112, 123 to 143, 148 to 168, 182 to 202, 212 to 232, 241 to 261, and 265 to 285; these read LLLALTMLIWAGSFIFIKIGL, FNLAFYRFLLASPLLMAWVFW, WLHLSVLALSGVTLLYAFQFL, ATNASILINTSAVFVALWGLV, GVFLSFAGVVLIVSKGTLEFF, IFGDVLMIVDGFLWAVYTVLG, AYAFALGTIFLIPFALMSGFA, VAALLYLSILCSVFAYVVWYY, SVAVYVYLVPLFTAIFAFYAL, and PDFFTAIGGIITIAGVYLTTA. 2 EamA domains span residues 14–136 and 159–285; these read LIWA…LIVS and FLWA…LTTA.

The protein belongs to the EamA transporter family.

The protein localises to the cell membrane. This is an uncharacterized protein from Archaeoglobus fulgidus (strain ATCC 49558 / DSM 4304 / JCM 9628 / NBRC 100126 / VC-16).